Here is a 547-residue protein sequence, read N- to C-terminus: (R)-citramalate synthase (547 aa).

The region spanning 8–278 (LWLYDTTLRD…YDCIEPEKLA (271 aa)) is the Pyruvate carboxyltransferase domain.

Belongs to the alpha-IPM synthase/homocitrate synthase family.

The enzyme catalyses pyruvate + acetyl-CoA + H2O = (3R)-citramalate + CoA + H(+). It participates in amino-acid biosynthesis; L-isoleucine biosynthesis; 2-oxobutanoate from pyruvate: step 1/3. Functionally, catalyzes the condensation of pyruvate and acetyl-coenzyme A to form (R)-citramalate. The polypeptide is (R)-citramalate synthase (Synechocystis sp. (strain ATCC 27184 / PCC 6803 / Kazusa)).